The chain runs to 109 residues: Class I hydrophobin 2 (109 aa).

An N-terminal signal peptide occupies residues 1 to 18 (MQFKLAFVSIALATLAVA). 4 cysteine pairs are disulfide-bonded: Cys-30–Cys-90, Cys-37–Cys-84, Cys-38–Cys-71, and Cys-91–Cys-104.

The protein belongs to the fungal hydrophobin family. As to quaternary structure, self-assembles to form functional amyloid fibrils called rodlets. Self-assembly into fibrillar rodlets occurs spontaneously at hydrophobic:hydrophilic interfaces and the rodlets further associate laterally to form amphipathic monolayers.

Its subcellular location is the secreted. The protein resides in the cell wall. Aerial growth, conidiation, and dispersal of filamentous fungi in the environment rely upon a capability of their secreting small amphipathic proteins called hydrophobins (HPBs) with low sequence identity. Class I can self-assemble into an outermost layer of rodlet bundles on aerial cell surfaces, conferring cellular hydrophobicity that supports fungal growth, development and dispersal; whereas Class II form highly ordered films at water-air interfaces through intermolecular interactions but contribute nothing to the rodlet structure. Hyd2 is a class I hydrophobin that may allow the dikaryotic mycelia to attach to the hydrophobic surface of the substrate. Higher expression in dikaryotic mycelia than in monokaryotic mycelia indicates that dikaryons require more hyd2 hydrophobin than the monokaryons, presumably for a higher rate of hyphal growth. The sequence is that of Class I hydrophobin 2 from Lentinula edodes (Shiitake mushroom).